The sequence spans 443 residues: Nuclear hormone receptor family member nhr-60 (443 aa).

Residues 1–20 show a composition bias toward low complexity; the sequence is MIQSSSSISQDSLDLPSILS. The segment at 1-40 is disordered; the sequence is MIQSSSSISQDSLDLPSILSTFSADEPEDEPSPTAVKSTK. Residues 44–121 constitute a DNA-binding region (nuclear receptor); that stretch reads PTECLICGNS…VGMNPLAMEV (78 aa). 2 NR C4-type zinc fingers span residues 47–67 and 83–104; these read CLIC…CNGC and CKAK…CRAC. In terms of domain architecture, NR LBD spans 196–439; it reads NEFSGLEYLL…KDLVMRVIED (244 aa). Positions 225–249 are disordered; the sequence is LRRDQLGPPRLPKPPSPGKPRDSQH. A compositionally biased stretch (pro residues) spans 233-242; it reads PRLPKPPSPG.

It belongs to the nuclear hormone receptor family.

The protein resides in the nucleus. Functionally, orphan nuclear receptor (Potential). Required for embryonic and larval morphogenesis and probably for seam cell positioning and migration. This chain is Nuclear hormone receptor family member nhr-60, found in Caenorhabditis elegans.